The primary structure comprises 182 residues: Large ribosomal subunit protein uL10 (182 aa).

It belongs to the universal ribosomal protein uL10 family. As to quaternary structure, part of the ribosomal stalk of the 50S ribosomal subunit. The N-terminus interacts with L11 and the large rRNA to form the base of the stalk. The C-terminus forms an elongated spine to which L12 dimers bind in a sequential fashion forming a multimeric L10(L12)X complex.

Functionally, forms part of the ribosomal stalk, playing a central role in the interaction of the ribosome with GTP-bound translation factors. The protein is Large ribosomal subunit protein uL10 of Gluconacetobacter diazotrophicus (strain ATCC 49037 / DSM 5601 / CCUG 37298 / CIP 103539 / LMG 7603 / PAl5).